The primary structure comprises 574 residues: Serine/threonine-protein kinase B (574 aa).

Positions 34-301 (YQTLGLLGKG…VLDALEMPTY (268 aa)) constitute a Protein kinase domain. ATP is bound by residues 40 to 48 (LGKGGFGAT) and Lys65. The Proton acceptor role is filled by Asp163. Positions 319-407 (GAGDEPATGI…GGSVGAGGID (89 aa)) are disordered. Residues 343–364 (TRFNTNVQPRDPSSTSLNTGIK) are compositionally biased toward polar residues. 2 Pentapeptide repeat domains span residues 454–493 (QNLV…DFGK) and 504–543 (ANLS…NFSG).

The protein belongs to the protein kinase superfamily. Ser/Thr protein kinase family. Post-translationally, autophosphorylated.

It catalyses the reaction L-seryl-[protein] + ATP = O-phospho-L-seryl-[protein] + ADP + H(+). The catalysed reaction is L-threonyl-[protein] + ATP = O-phospho-L-threonyl-[protein] + ADP + H(+). Protein kinase required for cell motility, but not for phototaxis. The chain is Serine/threonine-protein kinase B (spkB) from Synechocystis sp. (strain ATCC 27184 / PCC 6803 / Kazusa).